The primary structure comprises 544 residues: Putative glycerol-3-phosphate transporter 4 (544 aa).

Helical transmembrane passes span 28 to 47 (TFRYAILFITFIAYACYHAS), 121 to 141 (VAFLACYSIGMYVAGHLGDSL), 156 to 176 (FFVGLFGMGYFWNIHAFWFFL), 181 to 201 (AAGLFQATGWPSVVAVVGNWF), 218 to 238 (SVGNICGSLIAAGVLEYGWGW), and 240 to 260 (FIAPGFVMSLGGVLVYLFLAA). The disordered stretch occupies residues 281-313 (KRDVEEEEEEVEEDLGTDVEGDGEGSSGSGSGY). Residues 285 to 303 (EEEEEEVEEDLGTDVEGDG) are compositionally biased toward acidic residues. Transmembrane regions (helical) follow at residues 319–339 (VGLLQACMIPGVIPFALCLFF), 342–362 (LVAYTFLYWLPFYLSQTTIGG), 371–391 (GNLSTLFDVGGIVGGILCGYI), 402–422 (AAAFMYAAIPAMLVYHSYGGV), 428–448 (ILLMMVAGLFVNGPYALITTA), 471–491 (AIIDGTGSAGAALGPLLTGFL), and 494–514 (LGWQAVFYMLVVGALCAGLLL).

Belongs to the major facilitator superfamily. Organophosphate:Pi antiporter (OPA) (TC 2.A.1.4) family.

Its subcellular location is the membrane. This is Putative glycerol-3-phosphate transporter 4 from Arabidopsis thaliana (Mouse-ear cress).